We begin with the raw amino-acid sequence, 326 residues long: tRNA-modifying protein YgfZ (326 aa).

Residues Trp27 and Trp189 each contribute to the folate site.

Belongs to the tRNA-modifying YgfZ family.

The protein localises to the cytoplasm. Functionally, folate-binding protein involved in regulating the level of ATP-DnaA and in the modification of some tRNAs. It is probably a key factor in regulatory networks that act via tRNA modification, such as initiation of chromosomal replication. The protein is tRNA-modifying protein YgfZ of Salmonella typhimurium (strain LT2 / SGSC1412 / ATCC 700720).